Reading from the N-terminus, the 254-residue chain is Hemin import ATP-binding protein HmuV (254 aa).

An ABC transporter domain is found at 2–239 (LNINQVNINL…DTLSQVWHYD (238 aa)). Residue 34-41 (GPNGAGKS) participates in ATP binding.

Belongs to the ABC transporter superfamily. Heme (hemin) importer (TC 3.A.1.14.5) family. As to quaternary structure, the complex is composed of two ATP-binding proteins (HmuV), two transmembrane proteins (HmuU) and a solute-binding protein (HmuT).

It localises to the cell inner membrane. In terms of biological role, part of the ABC transporter complex HmuTUV involved in hemin import. Responsible for energy coupling to the transport system. The chain is Hemin import ATP-binding protein HmuV from Shewanella denitrificans (strain OS217 / ATCC BAA-1090 / DSM 15013).